The chain runs to 400 residues: Nicotinate phosphoribosyltransferase (400 aa).

At H220 the chain carries Phosphohistidine; by autocatalysis.

This sequence belongs to the NAPRTase family. In terms of processing, transiently phosphorylated on a His residue during the reaction cycle. Phosphorylation strongly increases the affinity for substrates and increases the rate of nicotinate D-ribonucleotide production. Dephosphorylation regenerates the low-affinity form of the enzyme, leading to product release.

The catalysed reaction is nicotinate + 5-phospho-alpha-D-ribose 1-diphosphate + ATP + H2O = nicotinate beta-D-ribonucleotide + ADP + phosphate + diphosphate. The protein operates within cofactor biosynthesis; NAD(+) biosynthesis; nicotinate D-ribonucleotide from nicotinate: step 1/1. Functionally, catalyzes the synthesis of beta-nicotinate D-ribonucleotide from nicotinate and 5-phospho-D-ribose 1-phosphate at the expense of ATP. The sequence is that of Nicotinate phosphoribosyltransferase from Escherichia fergusonii (strain ATCC 35469 / DSM 13698 / CCUG 18766 / IAM 14443 / JCM 21226 / LMG 7866 / NBRC 102419 / NCTC 12128 / CDC 0568-73).